We begin with the raw amino-acid sequence, 371 residues long: Queuine tRNA-ribosyltransferase (371 aa).

Catalysis depends on D90, which acts as the Proton acceptor. Residues 90 to 94 (DSGGF), D144, Q185, and G212 contribute to the substrate site. An RNA binding region spans residues 243–249 (GVGTPED). D262 functions as the Nucleophile in the catalytic mechanism. Residues 267 to 271 (TRNAR) form an RNA binding; important for wobble base 34 recognition region. Zn(2+) contacts are provided by C300, C302, C305, and H331.

The protein belongs to the queuine tRNA-ribosyltransferase family. In terms of assembly, homodimer. Within each dimer, one monomer is responsible for RNA recognition and catalysis, while the other monomer binds to the replacement base PreQ1. It depends on Zn(2+) as a cofactor.

The catalysed reaction is 7-aminomethyl-7-carbaguanine + guanosine(34) in tRNA = 7-aminomethyl-7-carbaguanosine(34) in tRNA + guanine. It participates in tRNA modification; tRNA-queuosine biosynthesis. Catalyzes the base-exchange of a guanine (G) residue with the queuine precursor 7-aminomethyl-7-deazaguanine (PreQ1) at position 34 (anticodon wobble position) in tRNAs with GU(N) anticodons (tRNA-Asp, -Asn, -His and -Tyr). Catalysis occurs through a double-displacement mechanism. The nucleophile active site attacks the C1' of nucleotide 34 to detach the guanine base from the RNA, forming a covalent enzyme-RNA intermediate. The proton acceptor active site deprotonates the incoming PreQ1, allowing a nucleophilic attack on the C1' of the ribose to form the product. After dissociation, two additional enzymatic reactions on the tRNA convert PreQ1 to queuine (Q), resulting in the hypermodified nucleoside queuosine (7-(((4,5-cis-dihydroxy-2-cyclopenten-1-yl)amino)methyl)-7-deazaguanosine). This is Queuine tRNA-ribosyltransferase from Acidithiobacillus ferrooxidans (strain ATCC 23270 / DSM 14882 / CIP 104768 / NCIMB 8455) (Ferrobacillus ferrooxidans (strain ATCC 23270)).